A 299-amino-acid polypeptide reads, in one-letter code: Sulfate adenylyltransferase subunit 2 (299 aa).

Belongs to the PAPS reductase family. CysD subfamily. As to quaternary structure, sulfate-activating enzymes, NodP and NodQ, may be physically associated.

It catalyses the reaction sulfate + ATP + H(+) = adenosine 5'-phosphosulfate + diphosphate. Proposed to provide activated sulfate for transfer to nod factor. The sequence is that of Sulfate adenylyltransferase subunit 2 (nodP) from Rhizobium meliloti (strain 1021) (Ensifer meliloti).